The following is a 664-amino-acid chain: MKRRNADCSKLRRPLKRNRITEGIYGSTFLYLKFLVVWALVLLADFVLEFRFEYLWPFWLFIRSVYDSFRYQGLAFSVFFVCVAFTSNIICLLFIPIQWLFFAASTYVWVQYVWHTERGVCLPTVSLWILFVYIEAAIRFKDLKNFHVDLCRPFAAHCIGYPVVTLGFGFKSYVSYKMRLRKQKEVQKENEFYMQLLQQALPPEQQMLQKQEKEAEEAAKGLPDMDSSILIHHNGGIPANKKLSTTLPEIEYREKGKEKDKDAKKHNLGINNNNILQPVDSKIQEIEYMENHINSKRLNNDLVGSTENLLKEDSCTASSKNYKNASGVVNSSPRSHSATNGSIPSSSSKNEKKQKCTSKSPSTHKDLMENCIPNNQLSKPDALVRLEQDIKKLKADLQASRQVEQELRSQISSLSSTERGIRSEMGQLRQENELLQNKLHNAVQMKQKDKQNISQLEKKLKAEQEARSFVEKQLMEEKKRKKLEEATAARAVAFAAASRGECTETLRNRIRELEAEGKKLTMDMKVKEDQIRELELKVQELRKYKENEKDTEVLMSALSAMQDKTQHLENSLSAETRIKLDLFSALGDAKRQLEIAQGQILQKDQEIKDLKQKIAEVMAVMPSITYSAATSPLSPVSPHYSSKFVETSPSGLDPNASVYQPLKK.

The next 4 membrane-spanning stretches (helical) occupy residues 28 to 48 (TFLY…DFVL), 75 to 95 (AFSV…LLFI), 120 to 140 (VCLP…AIRF), and 154 to 174 (FAAH…KSYV). Over residues 253–265 (REKGKEKDKDAKK) the composition is skewed to basic and acidic residues. Positions 253-274 (REKGKEKDKDAKKHNLGINNNN) are disordered. A Phosphoserine modification is found at Ser305. The span at 320–348 (KNYKNASGVVNSSPRSHSATNGSIPSSSS) shows a compositional bias: polar residues. Residues 320–375 (KNYKNASGVVNSSPRSHSATNGSIPSSSSKNEKKQKCTSKSPSTHKDLMENCIPNN) form a disordered region. N-linked (GlcNAc...) asparagine glycosylation is present at Asn324. Ser332 is modified (phosphoserine). Residues Asn340 and Asn452 are each glycosylated (N-linked (GlcNAc...) asparagine). Positions 630–664 (TSPLSPVSPHYSSKFVETSPSGLDPNASVYQPLKK) are disordered. Residues Ser631 and Ser634 each carry the phosphoserine modification. The N-linked (GlcNAc...) asparagine glycan is linked to Asn655.

The protein belongs to the macoilin family.

It localises to the rough endoplasmic reticulum membrane. The protein localises to the nucleus membrane. Its function is as follows. Plays a role in the regulation of neuronal activity. The polypeptide is Macoilin (MACO1) (Canis lupus familiaris (Dog)).